The chain runs to 105 residues: Probable non-functional immunoglobulin lambda variable 5-48 (105 aa).

An N-terminal signal peptide occupies residues 1-19 (MAWTPLLLLFLSHCTGSLS). Residues 20-44 (QAVLTQPTSLSASPGASARLTCTLR) are framework-1. The Ig-like domain maps to 20–105 (QAVLTQPTSL…NAGILFISGL (86 aa)). The complementarity-determining-1 stretch occupies residues 45 to 53 (SGISVGSYR). The segment at 54-70 (IYWYQQKPGSPPRYLLN) is framework-2. The interval 71–77 (YYSDSDK) is complementarity-determining-2. The framework-3 stretch occupies residues 78 to 105 (HQGSGVPSRFSGSKDASTNAGILFISGL).

In terms of assembly, immunoglobulins are composed of two identical heavy chains and two identical light chains; disulfide-linked.

It is found in the secreted. The protein resides in the cell membrane. Its function is as follows. Probable non-functional open reading frame (ORF) of V region of the variable domain of immunoglobulin light chains. Non-functional ORF generally cannot participate in the synthesis of a productive immunoglobulin chain due to altered V-(D)-J or switch recombination and/or splicing site (at mRNA level) and/or conserved amino acid change (protein level). Immunoglobulins, also known as antibodies, are membrane-bound or secreted glycoproteins produced by B lymphocytes. In the recognition phase of humoral immunity, the membrane-bound immunoglobulins serve as receptors which, upon binding of a specific antigen, trigger the clonal expansion and differentiation of B lymphocytes into immunoglobulins-secreting plasma cells. Secreted immunoglobulins mediate the effector phase of humoral immunity, which results in the elimination of bound antigens. The antigen binding site is formed by the variable domain of one heavy chain, together with that of its associated light chain. Thus, each immunoglobulin has two antigen binding sites with remarkable affinity for a particular antigen. The variable domains are assembled by a process called V-(D)-J rearrangement and can then be subjected to somatic hypermutations which, after exposure to antigen and selection, allow affinity maturation for a particular antigen. The sequence is that of Probable non-functional immunoglobulin lambda variable 5-48 from Homo sapiens (Human).